A 158-amino-acid polypeptide reads, in one-letter code: MAKKTKKPSNQIAANKKARHEYFIEETYEAGLVLQGWEVKAIRAGKMSITEAYVVFRGNEAFLFGAHIQPLLSSSTHVDPDSIRTRKLLLNRKEIDTLFGAVNQKGYACVPLEVYWKDSLVKCKIGLAKGKKLHDKRKTLKDRDWERDKERGFKQHLD.

Belongs to the SmpB family.

The protein resides in the cytoplasm. Functionally, required for rescue of stalled ribosomes mediated by trans-translation. Binds to transfer-messenger RNA (tmRNA), required for stable association of tmRNA with ribosomes. tmRNA and SmpB together mimic tRNA shape, replacing the anticodon stem-loop with SmpB. tmRNA is encoded by the ssrA gene; the 2 termini fold to resemble tRNA(Ala) and it encodes a 'tag peptide', a short internal open reading frame. During trans-translation Ala-aminoacylated tmRNA acts like a tRNA, entering the A-site of stalled ribosomes, displacing the stalled mRNA. The ribosome then switches to translate the ORF on the tmRNA; the nascent peptide is terminated with the 'tag peptide' encoded by the tmRNA and targeted for degradation. The ribosome is freed to recommence translation, which seems to be the essential function of trans-translation. This chain is SsrA-binding protein, found in Psychrobacter sp. (strain PRwf-1).